The chain runs to 1204 residues: ATP-dependent helicase/nuclease subunit A (1204 aa).

Positions 2–469 (TNFTKEQDQA…IILADNFRST (468 aa)) constitute a UvrD-like helicase ATP-binding domain. 23–30 (ASAGSGKT) serves as a coordination point for ATP. Residues 497-784 (GQLQFGASYY…KLMTIHASKG (288 aa)) enclose the UvrD-like helicase C-terminal domain.

The protein belongs to the helicase family. AddA subfamily. Heterodimer of AddA and AddB/RexB. Requires Mg(2+) as cofactor.

It catalyses the reaction Couples ATP hydrolysis with the unwinding of duplex DNA by translocating in the 3'-5' direction.. The enzyme catalyses ATP + H2O = ADP + phosphate + H(+). In terms of biological role, the heterodimer acts as both an ATP-dependent DNA helicase and an ATP-dependent, dual-direction single-stranded exonuclease. Recognizes the chi site generating a DNA molecule suitable for the initiation of homologous recombination. The AddA nuclease domain is required for chi fragment generation; this subunit has the helicase and 3' -&gt; 5' nuclease activities. In Lactobacillus gasseri (strain ATCC 33323 / DSM 20243 / BCRC 14619 / CIP 102991 / JCM 1131 / KCTC 3163 / NCIMB 11718 / NCTC 13722 / AM63), this protein is ATP-dependent helicase/nuclease subunit A.